The primary structure comprises 302 residues: Methionyl-tRNA formyltransferase (302 aa).

108 to 111 is a (6S)-5,6,7,8-tetrahydrofolate binding site; it reads SLLP. The span at 276–288 shows a compositional bias: basic and acidic residues; sequence REGKRPMEPEEFL. Residues 276–302 form a disordered region; the sequence is REGKRPMEPEEFLRGFPLPEGSRAHTA.

This sequence belongs to the Fmt family.

It carries out the reaction L-methionyl-tRNA(fMet) + (6R)-10-formyltetrahydrofolate = N-formyl-L-methionyl-tRNA(fMet) + (6S)-5,6,7,8-tetrahydrofolate + H(+). Its function is as follows. Attaches a formyl group to the free amino group of methionyl-tRNA(fMet). The formyl group appears to play a dual role in the initiator identity of N-formylmethionyl-tRNA by promoting its recognition by IF2 and preventing the misappropriation of this tRNA by the elongation apparatus. The polypeptide is Methionyl-tRNA formyltransferase (Cereibacter sphaeroides (strain ATCC 17029 / ATH 2.4.9) (Rhodobacter sphaeroides)).